The chain runs to 110 residues: Parvalbumin alpha (110 aa).

EF-hand domains are found at residues 39 to 74 and 78 to 110; these read KNAK…FAPE and LSEK…VANS. Residues Asp-52, Asp-54, Ser-56, Phe-58, Glu-60, Glu-63, Asp-91, Asp-93, Asp-95, Lys-97, and Glu-102 each coordinate Ca(2+).

Belongs to the parvalbumin family.

Functionally, in muscle, parvalbumin is thought to be involved in relaxation after contraction. It binds two calcium ions. The protein is Parvalbumin alpha of Callorhinchus milii (Ghost shark).